The chain runs to 418 residues: Nucleoside permease NupC (418 aa).

9 helical membrane passes run 2–22 (IFSS…AWVF), 34–54 (IVSA…VPLG), 93–113 (IGGF…ASLI), 174–194 (IFAV…AGYA), 198–218 (IPLP…LLFA), 264–284 (LLAF…VGGF), 292–314 (LGLI…WSQA), 354–374 (AIIT…MLIG), and 395–415 (VLVG…FIGL).

The protein belongs to the concentrative nucleoside transporter (CNT) (TC 2.A.41) family.

The protein localises to the cell inner membrane. Functionally, involved in purine nucleosides uptake. Could also be involved in uptake of nucleobases. The sequence is that of Nucleoside permease NupC from Helicobacter pylori (strain ATCC 700392 / 26695) (Campylobacter pylori).